The following is a 296-amino-acid chain: Maltose/maltodextrin transport system permease protein MalG (296 aa).

Topologically, residues 1 to 12 (MAMVQGKSLKYR) are cytoplasmic. A helical membrane pass occupies residues 13–35 (VWATHIAMWAFLALIIFPLLMII). At 36–88 (AISFREGNFATGSLIPDNPTLDHWKLALGFSITNADGTVTPPPFPVMTWLWNS) the chain is on the periplasmic side. In terms of domain architecture, ABC transmembrane type-1 spans 85-281 (LWNSVKVGGI…VPITAVFLLA (197 aa)). A helical transmembrane segment spans residues 89–111 (VKVGGISAILIVALSTTSAYAFA). The Cytoplasmic segment spans residues 112 to 123 (RMKFKGKNTILK). Residues 124-143 (AMMIFQMFPAVLALVALYAL) form a helical membrane-spanning segment. The Periplasmic segment spans residues 144 to 152 (FDKLGQYIP). A helical membrane pass occupies residues 153-175 (FLGLNTHGGLIFAYLGGIALHVW). Topologically, residues 176-204 (TIKGYFESIDSSLEEAAALDGATPWQAFR) are cytoplasmic. The chain crosses the membrane as a helical span at residues 205 to 227 (LVLLPLSVPILAVVFILSFIMVI). Residues 228-257 (GEVPVASLLLSDVDSYTLAVGMQQYLYPQN) lie on the Periplasmic side of the membrane. Residues 258-280 (YLWGDFAAAAVLSAVPITAVFLL) traverse the membrane as a helical segment. Residues 281–296 (AQRWLVGGLTAGGVKG) are Cytoplasmic-facing.

The protein belongs to the binding-protein-dependent transport system permease family. MalFG subfamily. The complex is composed of two ATP-binding proteins (MalK), two transmembrane proteins (MalG and MalF) and a solute-binding protein (MalE).

The protein resides in the cell inner membrane. In terms of biological role, part of the ABC transporter complex MalEFGK involved in maltose/maltodextrin import. Probably responsible for the translocation of the substrate across the membrane. The polypeptide is Maltose/maltodextrin transport system permease protein MalG (malG) (Vibrio parahaemolyticus serotype O3:K6 (strain RIMD 2210633)).